Reading from the N-terminus, the 268-residue chain is Myb-related protein 315 (268 aa).

HTH myb-type domains lie at 9–61 and 62–116; these read KFGL…MNYL and RPDL…KKKL. 2 DNA-binding regions (H-T-H motif) span residues 37 to 61 and 89 to 112; these read WRVI…MNYL and WSKI…NTHI.

As to expression, expressed in roots, stems, leaves, seed pods and flowers. Strongest expression in the stem.

The protein localises to the nucleus. Its function is as follows. Transcription factor. The chain is Myb-related protein 315 from Antirrhinum majus (Garden snapdragon).